A 174-amino-acid chain; its full sequence is D(1B) dopamine receptor (174 aa).

A helical membrane pass occupies residues 1-10; the sequence is SILNLCIISV. Topologically, residues 11–32 are cytoplasmic; sequence DRYWAISRPFCYERKMTQRVAL. A helical membrane pass occupies residues 33 to 54; that stretch reads VMVGLAWTLSILISFIPVQLHW. At 55 to 96 the chain is on the extracellular side; sequence HRDKVGSRDGLDPPSNLANGTPWEEAGESDRSAENCDSSLNR. Residues 64 to 88 are disordered; it reads GLDPPSNLANGTPWEEAGESDRSAE. Residue Asn-95 is glycosylated (N-linked (GlcNAc...) asparagine). A helical membrane pass occupies residues 97–119; it reads TYAISSSLISFYIPVAIMIVTYT. Topologically, residues 120–169 are cytoplasmic; that stretch reads RIYRIAQVQIRRISSLERAAEHAQSCRSREACAPDSGLRASIKKETKVLK. A helical transmembrane segment spans residues 170–174; the sequence is TLSVI.

This sequence belongs to the G-protein coupled receptor 1 family.

Its subcellular location is the cell membrane. Functionally, dopamine receptor whose activity is mediated by G proteins which activate adenylyl cyclase. This chain is D(1B) dopamine receptor (DRD5), found in Bos taurus (Bovine).